We begin with the raw amino-acid sequence, 554 residues long: MSSLYIKEATGVDELTTAGSQDHPFKTPAYALFASQQKSDATEPKLFVFKTEDNEYQEISASALKKARKGCDGLKKKAVKQKEQELKKQQKEAENAAKQLSALNITIKEDESLPAAIKTRIYDSYSKVGQRVKVSGWIHRLRSNKKVIFVVLRDGSGFIQCVLSGDLALAQQTLDLTLESTVTLYGTIVKLPEGKTAPGGVELNVDYYEVVGLAPGGEDSFTNKIAEGSDPSLLLDQRHLALRGDALSAVMKVRAALLKSVRRVYDEEHLTEVTPPCMVQTQVEGGSTLFKMNYYGEEAYLTQSSQLYLETCLASLGDVYTIQESFRAEKSHTRRHLSEYTHIEAELAFLTFDDLLQHIETLIVKSVQYVLEDPIAGPLVKQLNPNFKAPKAPFMRLQYKDAITWLNEHDIKNEEGEDFKFGDDIAEAAERKMTDTIGVPIFLTRFPVEIKSFYMKRCSDDPRVTESVDVLMPNVGEITGGSMRIDDMDELMAGFKREGIDTDAYYWFIDQRKYGTCPHGGYGIGTERILAWLCDRFTVRDCSLYPRFSGRCKP.

The protein belongs to the class-II aminoacyl-tRNA synthetase family.

Its subcellular location is the cytoplasm. The protein localises to the cytosol. It catalyses the reaction tRNA(Asn) + L-asparagine + ATP = L-asparaginyl-tRNA(Asn) + AMP + diphosphate + H(+). In terms of biological role, catalyzes the attachment of asparagine to tRNA(Asn) in a two-step reaction: asparagine is first activated by ATP to form Asn-AMP and then transferred to the acceptor end of tRNA(Asn). The chain is Asparagine--tRNA ligase, cytoplasmic from Saccharomyces cerevisiae (strain ATCC 204508 / S288c) (Baker's yeast).